Consider the following 156-residue polypeptide: Ribonuclease pancreatic (156 aa).

Positions 1-28 (MALEKSLALLPLLVLVLLVLGWVQPSLG) are cleaved as a signal peptide. The span at 33–43 (AQKFQRQHMDS) shows a compositional bias: basic and acidic residues. A disordered region spans residues 33-52 (AQKFQRQHMDSDGSPSSNPT). Residues Lys35 and Arg38 each coordinate substrate. His40 functions as the Proton acceptor in the catalytic mechanism. Disulfide bonds link Cys54/Cys112, Cys68/Cys123, Cys86/Cys138, and Cys93/Cys100. N-linked (GlcNAc...) asparagine glycosylation occurs at Asn62. Residues 69–73 (KPVNT), Lys94, and Arg113 each bind substrate. N-linked (GlcNAc...) asparagine glycosylation is present at Asn116. His147 (proton donor) is an active-site residue.

Belongs to the pancreatic ribonuclease family. In terms of assembly, monomer. Interacts with and forms tight 1:1 complexes with RNH1. Dimerization of two such complexes may occur. Interaction with RNH1 inhibits this protein.

It is found in the secreted. The catalysed reaction is an [RNA] containing cytidine + H2O = an [RNA]-3'-cytidine-3'-phosphate + a 5'-hydroxy-ribonucleotide-3'-[RNA].. The enzyme catalyses an [RNA] containing uridine + H2O = an [RNA]-3'-uridine-3'-phosphate + a 5'-hydroxy-ribonucleotide-3'-[RNA].. Endonuclease that catalyzes the cleavage of RNA on the 3' side of pyrimidine nucleotides. Acts on single-stranded and double-stranded RNA. In Saguinus oedipus (Cotton-top tamarin), this protein is Ribonuclease pancreatic (RNASE1).